The following is a 276-amino-acid chain: Octanoyltransferase LipM (276 aa).

One can recognise a BPL/LPL catalytic domain in the interval 31-246 (GLIPPVIRFY…GFAKSLQIEL (216 aa)). The active-site Acyl-thioester intermediate is Cys-148.

It belongs to the octanoyltransferase LipM family. Monomer.

The enzyme catalyses octanoyl-[ACP] + L-lysyl-[protein] = N(6)-octanoyl-L-lysyl-[protein] + holo-[ACP] + H(+). The protein operates within protein modification; protein lipoylation via endogenous pathway; protein N(6)-(lipoyl)lysine from octanoyl-[acyl-carrier-protein]. Its function is as follows. Catalyzes the transfer of endogenously produced octanoic acid from octanoyl-acyl-carrier-protein onto the lipoyl domain of GcvH, an intermediate carrier during protein lipoylation. The polypeptide is Octanoyltransferase LipM (Lysinibacillus sphaericus (strain C3-41)).